Reading from the N-terminus, the 165-residue chain is Methylated-DNA--protein-cysteine methyltransferase, constitutive (165 aa).

Cysteine 130 functions as the Nucleophile; methyl group acceptor in the catalytic mechanism.

Belongs to the MGMT family.

It is found in the cytoplasm. It carries out the reaction a 6-O-methyl-2'-deoxyguanosine in DNA + L-cysteinyl-[protein] = S-methyl-L-cysteinyl-[protein] + a 2'-deoxyguanosine in DNA. It catalyses the reaction a 4-O-methyl-thymidine in DNA + L-cysteinyl-[protein] = a thymidine in DNA + S-methyl-L-cysteinyl-[protein]. In terms of biological role, involved in the cellular defense against the biological effects of O6-methylguanine (O6-MeG) and O4-methylthymine (O4-MeT) in DNA. Repairs the methylated nucleobase in DNA by stoichiometrically transferring the methyl group to a cysteine residue in the enzyme. This is a suicide reaction: the enzyme is irreversibly inactivated. This chain is Methylated-DNA--protein-cysteine methyltransferase, constitutive, found in Bacillus subtilis (strain 168).